Here is a 649-residue protein sequence, read N- to C-terminus: Acetylcholinesterase (649 aa).

The signal sequence occupies residues M1 to G38. A disulfide bridge links C104 with C131. N-linked (GlcNAc...) asparagine glycans are attached at residues N126 and N174. S276 serves as the catalytic Acyl-ester intermediate. An intrachain disulfide couples C330 to C345. A glycan (N-linked (GlcNAc...) asparagine) is linked at N331. Residues E405 and H518 each act as charge relay system in the active site. C480 and C598 are joined by a disulfide. A glycan (N-linked (GlcNAc...) asparagine) is linked at N531. S619 carries GPI-anchor amidated serine lipidation. Residues G620 to F649 constitute a propeptide, removed in mature form.

Belongs to the type-B carboxylesterase/lipase family. Homodimer; disulfide-linked. The active unit is formed by non-covalent association of the 55 kDa and 16 kDa subunits. Proteolytic cleavage into the 16 kDa subunit and the 55 kDa subunits originates from the hydrophilic peptide, aa 148-180, and is associated with excretion out of the cell. Post-translationally, neither N-glycosylation nor dimerization is required for enzyme activity or substrate specificity, but protects the protein against proteolytic digestion.

It localises to the synapse. Its subcellular location is the cell membrane. The catalysed reaction is acetylcholine + H2O = choline + acetate + H(+). In terms of biological role, rapidly hydrolyzes choline released into the synapse. It can hydrolyze butyrylthiocholine. In Drosophila melanogaster (Fruit fly), this protein is Acetylcholinesterase (Ace).